The sequence spans 401 residues: MRQAWRWFGPEAGVPLDAVRQAGATDIVSALHEVPIGQEWTSAQIVERKNLIESTPTGRHPLTWSVVESIPVSDDIKRSGKAARHDIGAWIASMEALARNDIKVICYNFMPVVDWCRTDLDYITSTGATAMRFDQDRFAAFDLHILRRKGAEKDYSEEDRIAARAIFEAMDETEIEQLIVNIASALPGSTTEPLTIPAFRKKLETYASIDAAHLRRNLVEFLEAVTPVADSLGVKLTLHPDDPPRSLFGLPRIASTEADYAAIFAAVPAQSNGMCFCTGSLGVRADNDLPAIARRFASRIHFSHLRATTREGDGRTFHEAAHLEGDVDMVGILRILLEEDRKRDAGQTIIFRSDHGHRMMDDLEKKVTPGYPVIGRMRGLAELRGIITALDACALEYDPNV.

It belongs to the mannonate dehydratase family. Fe(2+) is required as a cofactor. The cofactor is Mn(2+).

The catalysed reaction is D-mannonate = 2-dehydro-3-deoxy-D-gluconate + H2O. It participates in carbohydrate metabolism; pentose and glucuronate interconversion. Catalyzes the dehydration of D-mannonate. In Brucella melitensis biotype 2 (strain ATCC 23457), this protein is Mannonate dehydratase.